The chain runs to 56 residues: Ferredoxin (56 aa).

2 4Fe-4S ferredoxin-type domains span residues 2–28 (AYKI…SQGD) and 29–56 (TQFV…PVQE). [4Fe-4S] cluster is bound by residues Cys-9, Cys-12, Cys-15, Cys-19, Cys-38, Cys-41, Cys-44, and Cys-48.

It depends on [4Fe-4S] cluster as a cofactor.

Functionally, ferredoxins are iron-sulfur proteins that transfer electrons in a wide variety of metabolic reactions. This is Ferredoxin (fer) from Clostridium perfringens (strain 13 / Type A).